Here is a 513-residue protein sequence, read N- to C-terminus: 2,3-bisphosphoglycerate-independent phosphoglycerate mutase (513 aa).

Residues Asp13 and Ser63 each coordinate Mn(2+). The Phosphoserine intermediate role is filled by Ser63. Substrate is bound by residues His124, 154–155 (RD), Arg186, Arg192, 262–265 (RADR), and Lys335. Mn(2+) contacts are provided by Asp402, His406, Asp443, His444, and His462.

It belongs to the BPG-independent phosphoglycerate mutase family. Monomer. Mn(2+) serves as cofactor.

The enzyme catalyses (2R)-2-phosphoglycerate = (2R)-3-phosphoglycerate. It participates in carbohydrate degradation; glycolysis; pyruvate from D-glyceraldehyde 3-phosphate: step 3/5. Catalyzes the interconversion of 2-phosphoglycerate and 3-phosphoglycerate. The protein is 2,3-bisphosphoglycerate-independent phosphoglycerate mutase of Shewanella frigidimarina (strain NCIMB 400).